The chain runs to 482 residues: Isoxanthopterin deaminase (482 aa).

The Zn(2+) site is built by H74 and H76. Q79 contributes to the substrate binding site. H246 provides a ligand contact to Zn(2+). The substrate site is built by E249 and H283. Zn(2+)-binding residues include H283 and D334.

Belongs to the metallo-dependent hydrolases superfamily. ATZ/TRZ family. The cofactor is Zn(2+).

It carries out the reaction a 2-amino-4-hydroxypteridine + H2O + H(+) = a 2,4-dihydroxypteridine + NH4(+). The chain is Isoxanthopterin deaminase from Unknown prokaryotic organism.